The following is a 480-amino-acid chain: Thiamine biosynthesis bifunctional protein ThiM/ThiE (480 aa).

A hydroxyethylthiazole kinase region spans residues 1–287 (MSTLPERVRE…LYVLVSGATP (287 aa)). M40 contributes to the 5-(2-hydroxyethyl)-4-methylthiazole binding site. The ATP site is built by R116 and T164. A 5-(2-hydroxyethyl)-4-methylthiazole-binding site is contributed by G191. The tract at residues 288–480 (PDVLEAVLQA…VRRAKGEVSA (193 aa)) is thiamine-phosphate synthase. 4-amino-2-methyl-5-(diphosphooxymethyl)pyrimidine-binding positions include 303 to 307 (QFREK) and N335. Positions 336 and 355 each coordinate Mg(2+). Position 374 (T374) interacts with 4-amino-2-methyl-5-(diphosphooxymethyl)pyrimidine. 400–402 (TPS) provides a ligand contact to 2-[(2R,5Z)-2-carboxy-4-methylthiazol-5(2H)-ylidene]ethyl phosphate. Residue K403 participates in 4-amino-2-methyl-5-(diphosphooxymethyl)pyrimidine binding. 2-[(2R,5Z)-2-carboxy-4-methylthiazol-5(2H)-ylidene]ethyl phosphate contacts are provided by residues G431 and 451–452 (IS).

In the N-terminal section; belongs to the Thz kinase family. This sequence in the C-terminal section; belongs to the thiamine-phosphate synthase family. The cofactor is Mg(2+).

It catalyses the reaction 5-(2-hydroxyethyl)-4-methylthiazole + ATP = 4-methyl-5-(2-phosphooxyethyl)-thiazole + ADP + H(+). The enzyme catalyses 2-[(2R,5Z)-2-carboxy-4-methylthiazol-5(2H)-ylidene]ethyl phosphate + 4-amino-2-methyl-5-(diphosphooxymethyl)pyrimidine + 2 H(+) = thiamine phosphate + CO2 + diphosphate. The catalysed reaction is 2-(2-carboxy-4-methylthiazol-5-yl)ethyl phosphate + 4-amino-2-methyl-5-(diphosphooxymethyl)pyrimidine + 2 H(+) = thiamine phosphate + CO2 + diphosphate. It carries out the reaction 4-methyl-5-(2-phosphooxyethyl)-thiazole + 4-amino-2-methyl-5-(diphosphooxymethyl)pyrimidine + H(+) = thiamine phosphate + diphosphate. Its pathway is cofactor biosynthesis; thiamine diphosphate biosynthesis; 4-methyl-5-(2-phosphoethyl)-thiazole from 5-(2-hydroxyethyl)-4-methylthiazole: step 1/1. It participates in cofactor biosynthesis; thiamine diphosphate biosynthesis; thiamine phosphate from 4-amino-2-methyl-5-diphosphomethylpyrimidine and 4-methyl-5-(2-phosphoethyl)-thiazole: step 1/1. In terms of biological role, condenses 4-methyl-5-(beta-hydroxyethyl)thiazole monophosphate (THZ-P) and 2-methyl-4-amino-5-hydroxymethyl pyrimidine pyrophosphate (HMP-PP) to form thiamine monophosphate (TMP). This chain is Thiamine biosynthesis bifunctional protein ThiM/ThiE (thiM/thiE), found in Symbiobacterium thermophilum (strain DSM 24528 / JCM 14929 / IAM 14863 / T).